The sequence spans 110 residues: Large ribosomal subunit protein uL22 (110 aa).

The protein belongs to the universal ribosomal protein uL22 family. In terms of assembly, part of the 50S ribosomal subunit.

This protein binds specifically to 23S rRNA; its binding is stimulated by other ribosomal proteins, e.g. L4, L17, and L20. It is important during the early stages of 50S assembly. It makes multiple contacts with different domains of the 23S rRNA in the assembled 50S subunit and ribosome. Its function is as follows. The globular domain of the protein is located near the polypeptide exit tunnel on the outside of the subunit, while an extended beta-hairpin is found that lines the wall of the exit tunnel in the center of the 70S ribosome. The sequence is that of Large ribosomal subunit protein uL22 from Mycoplasmopsis pulmonis (strain UAB CTIP) (Mycoplasma pulmonis).